The sequence spans 642 residues: Threonine--tRNA ligase (642 aa).

The 61-residue stretch at 1 to 61 folds into the TGS domain; the sequence is MPVITLPDGS…ENDAQLAIIT (61 aa). The catalytic stretch occupies residues 243 to 534; sequence DHRKIGKQLD…LTEEFAGFFP (292 aa). Position 286 is an N6-acetyllysine (Lys-286). Positions 334, 385, and 511 each coordinate Zn(2+).

Belongs to the class-II aminoacyl-tRNA synthetase family. In terms of assembly, homodimer. Zn(2+) is required as a cofactor.

The protein resides in the cytoplasm. It carries out the reaction tRNA(Thr) + L-threonine + ATP = L-threonyl-tRNA(Thr) + AMP + diphosphate + H(+). Catalyzes the attachment of threonine to tRNA(Thr) in a two-step reaction: L-threonine is first activated by ATP to form Thr-AMP and then transferred to the acceptor end of tRNA(Thr). Also edits incorrectly charged L-seryl-tRNA(Thr). The chain is Threonine--tRNA ligase from Escherichia fergusonii (strain ATCC 35469 / DSM 13698 / CCUG 18766 / IAM 14443 / JCM 21226 / LMG 7866 / NBRC 102419 / NCTC 12128 / CDC 0568-73).